We begin with the raw amino-acid sequence, 453 residues long: MERTCLAVILAAGDSTRMKSSKSKVLHPVAGRPMIAHVVEAVASAGISSVALVVGRDAEEVAKAASIAGVGIEACLQKERLGTGHAVLAAREAIAKGYDDILVTYGDVPLQTDGPLKAARQGLADGSDIVVIGFHTDRPTGYGRLLVKDGELIAIREEKDATDAERTVTWCNSGLMAINGRKALDLLQRIGNANAKGEFYLTDLVEIARSLGGRVTAVDAPEIEMTGCNTRAELAVIERFWQERRRHQLMLSGVTMIAPETVFLSYDTVIGQDALIEPNVVFGPGAVIDSGAVIHAFSHIEGAHVSQGATVGPFARLRPGADLGNGSKVGNFCEVKNGRIGEGAKVNHLTYIGDAVIGAGSNIGAGTITCNYDGVNKSETVIGENAFIGSNSSLVAPVTIGDGAYIASGSVITADVPADALALGRARQEIKPGRASLLRERALATKAAKKAKG.

The interval 1–231 (MERTCLAVIL…EIEMTGCNTR (231 aa)) is pyrophosphorylase. Residues 10 to 13 (LAAG), Lys24, Gln77, 82 to 83 (GT), 105 to 107 (YGD), Gly143, Glu157, Asn172, and Asn229 each bind UDP-N-acetyl-alpha-D-glucosamine. Asp107 provides a ligand contact to Mg(2+). Asn229 is a Mg(2+) binding site. The linker stretch occupies residues 232-252 (AELAVIERFWQERRRHQLMLS). Residues 253 to 453 (GVTMIAPETV…ATKAAKKAKG (201 aa)) are N-acetyltransferase. Positions 318 and 336 each coordinate UDP-N-acetyl-alpha-D-glucosamine. The active-site Proton acceptor is the His348. UDP-N-acetyl-alpha-D-glucosamine contacts are provided by Tyr351 and Asn362. Residues Ala365, 371–372 (NY), Ser390, Ser408, and Arg425 contribute to the acetyl-CoA site.

This sequence in the N-terminal section; belongs to the N-acetylglucosamine-1-phosphate uridyltransferase family. The protein in the C-terminal section; belongs to the transferase hexapeptide repeat family. As to quaternary structure, homotrimer. The cofactor is Mg(2+).

The protein resides in the cytoplasm. It catalyses the reaction alpha-D-glucosamine 1-phosphate + acetyl-CoA = N-acetyl-alpha-D-glucosamine 1-phosphate + CoA + H(+). The enzyme catalyses N-acetyl-alpha-D-glucosamine 1-phosphate + UTP + H(+) = UDP-N-acetyl-alpha-D-glucosamine + diphosphate. It participates in nucleotide-sugar biosynthesis; UDP-N-acetyl-alpha-D-glucosamine biosynthesis; N-acetyl-alpha-D-glucosamine 1-phosphate from alpha-D-glucosamine 6-phosphate (route II): step 2/2. It functions in the pathway nucleotide-sugar biosynthesis; UDP-N-acetyl-alpha-D-glucosamine biosynthesis; UDP-N-acetyl-alpha-D-glucosamine from N-acetyl-alpha-D-glucosamine 1-phosphate: step 1/1. The protein operates within bacterial outer membrane biogenesis; LPS lipid A biosynthesis. Catalyzes the last two sequential reactions in the de novo biosynthetic pathway for UDP-N-acetylglucosamine (UDP-GlcNAc). The C-terminal domain catalyzes the transfer of acetyl group from acetyl coenzyme A to glucosamine-1-phosphate (GlcN-1-P) to produce N-acetylglucosamine-1-phosphate (GlcNAc-1-P), which is converted into UDP-GlcNAc by the transfer of uridine 5-monophosphate (from uridine 5-triphosphate), a reaction catalyzed by the N-terminal domain. In Rhizobium leguminosarum bv. trifolii (strain WSM2304), this protein is Bifunctional protein GlmU.